A 462-amino-acid polypeptide reads, in one-letter code: Chromosomal replication initiator protein DnaA (462 aa).

The tract at residues 1–84 (MAVSLWQQCI…RFDIGSRPSA (84 aa)) is domain I, interacts with DnaA modulators. The tract at residues 84 to 125 (APKPIQATAAVVKPKLESSPQKSQTSFNVNAPEPAATANHRS) is domain II. The tract at residues 126-342 (NINPTYQFEN…GALNRVIANA (217 aa)) is domain III, AAA+ region. ATP-binding residues include glycine 170, glycine 172, lysine 173, and threonine 174. The interval 343–462 (NFTGRPITID…YANLIRTLSS (120 aa)) is domain IV, binds dsDNA.

Belongs to the DnaA family. In terms of assembly, oligomerizes as a right-handed, spiral filament on DNA at oriC.

Its subcellular location is the cytoplasm. In terms of biological role, plays an essential role in the initiation and regulation of chromosomal replication. ATP-DnaA binds to the origin of replication (oriC) to initiate formation of the DNA replication initiation complex once per cell cycle. Binds the DnaA box (a 9 base pair repeat at the origin) and separates the double-stranded (ds)DNA. Forms a right-handed helical filament on oriC DNA; dsDNA binds to the exterior of the filament while single-stranded (ss)DNA is stabiized in the filament's interior. The ATP-DnaA-oriC complex binds and stabilizes one strand of the AT-rich DNA unwinding element (DUE), permitting loading of DNA polymerase. After initiation quickly degrades to an ADP-DnaA complex that is not apt for DNA replication. Binds acidic phospholipids. This is Chromosomal replication initiator protein DnaA from Shewanella woodyi (strain ATCC 51908 / MS32).